A 211-amino-acid chain; its full sequence is Glutathione S-transferase class-mu 28 kDa isozyme (211 aa).

Position 2 is an N-acetylalanine (Ala2). The GST N-terminal domain maps to 4-86; it reads EHIKVIYFDG…YMAKKHHMMG (83 aa). Residues Tyr10, 10 to 11, Arg16, 41 to 45, Leu53, 55 to 56, and 70 to 71 contribute to the glutathione site; these read YF, WPKIK, AV, and ES. Residues 88 to 211 form the GST C-terminal domain; that stretch reads TDEEYYSVEK…YLSNRPATPF (124 aa).

The protein belongs to the GST superfamily. Mu family. In terms of assembly, homodimer. As to expression, in the adult, expressed in excretory epithelial cells but absent from the caecal epithelium and flame cells. Also expressed in the tegument and its extensions into the parenchyma. In the schistosomulum, expressed in the tegument and associated structures. Not expressed in digestive tract, reproductive organs or muscles (at protein level).

The catalysed reaction is RX + glutathione = an S-substituted glutathione + a halide anion + H(+). In terms of biological role, conjugation of reduced glutathione to a wide number of exogenous and endogenous hydrophobic electrophiles. GST isoenzymes appear to play a central role in the parasite detoxification system. Other functions are also suspected including a role in increasing the solubility of haematin in the parasite gut. The protein is Glutathione S-transferase class-mu 28 kDa isozyme (GST28) of Schistosoma mansoni (Blood fluke).